Here is a 303-residue protein sequence, read N- to C-terminus: Glycine--tRNA ligase alpha subunit (303 aa).

Belongs to the class-II aminoacyl-tRNA synthetase family. Tetramer of two alpha and two beta subunits.

It localises to the cytoplasm. The enzyme catalyses tRNA(Gly) + glycine + ATP = glycyl-tRNA(Gly) + AMP + diphosphate. In Bordetella pertussis (strain Tohama I / ATCC BAA-589 / NCTC 13251), this protein is Glycine--tRNA ligase alpha subunit.